Here is a 311-residue protein sequence, read N- to C-terminus: Mas-related G-protein coupled receptor member E (311 aa).

Residues 1–25 (MEPREAGQHAGAADGAQEDVAFNLV) are Extracellular-facing. The chain crosses the membrane as a helical span at residues 26–46 (ILSLTEGLGLGGLLGNGAVLW). The Cytoplasmic segment spans residues 47 to 63 (LLSSNVYRNPFAIYLLD). The chain crosses the membrane as a helical span at residues 64 to 84 (VACADLIFLGCHMVAIIPDLL). Residues 85 to 95 (QGRLDFPGFVQ) lie on the Extracellular side of the membrane. Residues 96–116 (TSLATLRFFCYIVGLSLLVAV) traverse the membrane as a helical segment. Topologically, residues 117-136 (SVEQCLAALFPAWYSCRRPR) are cytoplasmic. A helical membrane pass occupies residues 137–157 (HLTTCVCALTWACCLLLHLLL). The Extracellular portion of the chain corresponds to 158-177 (SGACTQFFGEPSRHLCRTLW). Residues 178-198 (LVAAVLLAVLCCTMCGASLML) traverse the membrane as a helical segment. Residues 199–216 (LLQVERGPQRPPPRGFPT) lie on the Cytoplasmic side of the membrane. A helical transmembrane segment spans residues 217–237 (LILLAVLLFLFCGLPFGIYWL). The Extracellular segment spans residues 238–251 (SRNLLWHIPHYFYH). A helical transmembrane segment spans residues 252–272 (FSFLTAAVYCAAKPVVYFCLG). Topologically, residues 273-311 (SAQGRRLPLRLVLQRALGDEAELGAVRETSRRGLVDIAA) are cytoplasmic.

Belongs to the G-protein coupled receptor 1 family. Mas subfamily.

Its subcellular location is the cell membrane. Orphan receptor. May regulate nociceptor function and/or development, including the sensation or modulation of pain. In Macaca fascicularis (Crab-eating macaque), this protein is Mas-related G-protein coupled receptor member E (MRGPRE).